Here is a 214-residue protein sequence, read N- to C-terminus: MADS-box protein CMB2 (214 aa).

The 56-residue stretch at 3 to 58 folds into the MADS-box domain; it reads RGKLEIRKIENKTNRQVTFSKRRNGIMKKAQELTVLCDAKVSLLMISSTHKLHHYL. In terms of domain architecture, K-box spans 84 to 174; it reads WERMQEQHRK…VMELEAKFRG (91 aa).

In flowers. Not found in vegetative tissues.

The protein resides in the nucleus. This Dianthus caryophyllus (Carnation) protein is MADS-box protein CMB2 (CMB2).